The following is a 186-amino-acid chain: Ribosome-recycling factor (186 aa).

The protein belongs to the RRF family.

The protein resides in the cytoplasm. Responsible for the release of ribosomes from messenger RNA at the termination of protein biosynthesis. May increase the efficiency of translation by recycling ribosomes from one round of translation to another. In Rickettsia bellii (strain OSU 85-389), this protein is Ribosome-recycling factor.